Here is a 248-residue protein sequence, read N- to C-terminus: Pyridoxine 5'-phosphate synthase (248 aa).

3-amino-2-oxopropyl phosphate is bound at residue asparagine 11. A 1-deoxy-D-xylulose 5-phosphate-binding site is contributed by 13-14 (DH). Arginine 22 lines the 3-amino-2-oxopropyl phosphate pocket. The Proton acceptor role is filled by histidine 47. 1-deoxy-D-xylulose 5-phosphate contacts are provided by arginine 49 and histidine 54. The active-site Proton acceptor is the glutamate 74. 1-deoxy-D-xylulose 5-phosphate is bound at residue threonine 104. The active-site Proton donor is the histidine 198. 3-amino-2-oxopropyl phosphate-binding positions include glycine 199 and 220 to 221 (GH).

Belongs to the PNP synthase family. As to quaternary structure, homooctamer; tetramer of dimers.

It localises to the cytoplasm. It carries out the reaction 3-amino-2-oxopropyl phosphate + 1-deoxy-D-xylulose 5-phosphate = pyridoxine 5'-phosphate + phosphate + 2 H2O + H(+). It functions in the pathway cofactor biosynthesis; pyridoxine 5'-phosphate biosynthesis; pyridoxine 5'-phosphate from D-erythrose 4-phosphate: step 5/5. Catalyzes the complicated ring closure reaction between the two acyclic compounds 1-deoxy-D-xylulose-5-phosphate (DXP) and 3-amino-2-oxopropyl phosphate (1-amino-acetone-3-phosphate or AAP) to form pyridoxine 5'-phosphate (PNP) and inorganic phosphate. This is Pyridoxine 5'-phosphate synthase from Ruegeria pomeroyi (strain ATCC 700808 / DSM 15171 / DSS-3) (Silicibacter pomeroyi).